The primary structure comprises 263 residues: Glucosamine-6-phosphate deaminase (263 aa).

Catalysis depends on Asp-72, which acts as the Proton acceptor; for enolization step. The For ring-opening step role is filled by Asp-141. His-143 functions as the Proton acceptor; for ring-opening step in the catalytic mechanism. Glu-148 (for ring-opening step) is an active-site residue.

Belongs to the glucosamine/galactosamine-6-phosphate isomerase family. NagB subfamily.

It catalyses the reaction alpha-D-glucosamine 6-phosphate + H2O = beta-D-fructose 6-phosphate + NH4(+). It participates in amino-sugar metabolism; N-acetylneuraminate degradation; D-fructose 6-phosphate from N-acetylneuraminate: step 5/5. Its activity is regulated as follows. Allosterically activated by N-acetylglucosamine 6-phosphate (GlcNAc6P). Functionally, catalyzes the reversible isomerization-deamination of glucosamine 6-phosphate (GlcN6P) to form fructose 6-phosphate (Fru6P) and ammonium ion. The chain is Glucosamine-6-phosphate deaminase from Porphyromonas gingivalis (strain ATCC 33277 / DSM 20709 / CIP 103683 / JCM 12257 / NCTC 11834 / 2561).